We begin with the raw amino-acid sequence, 394 residues long: Penicillopepsin-2 (394 aa).

Residues 1–20 form the signal peptide; sequence MVVFSKITVVLAGLATVASA. A propeptide spans 21 to 71 (activation peptide); the sequence is VPTGTSRKSTFTVNQKARPVAQAKAINLPGMYASALSKYGAAVPASVKAAA. Residues 87–391 form the Peptidase A1 domain; it reads YLTPVNVGGT…DANGPRLGFA (305 aa). The active site involves Asp-103. A glycan (N-linked (GlcNAc...) asparagine) is linked at Asn-132. The active site involves Asp-283. Cys-319 and Cys-354 are joined by a disulfide.

Belongs to the peptidase A1 family. Monomer.

It localises to the secreted. It catalyses the reaction Hydrolysis of proteins with broad specificity similar to that of pepsin A, preferring hydrophobic residues at P1 and P1', but also cleaving 20-Gly-|-Glu-21 in the B chain of insulin. Clots milk, and activates trypsinogen.. Its function is as follows. Secreted aspartic endopeptidase that allows assimilation of proteinaceous substrates. The scissile peptide bond is attacked by a nucleophilic water molecule activated by two aspartic residues in the active site. Shows a broad primary substrate specificity. Favors hydrophobic residues at the P1 and P1' positions, but can also activate trypsinogen and hydrolyze the B chain of insulin between positions 'Gly-20' and 'Glu-21'. The polypeptide is Penicillopepsin-2 (Penicillium janthinellum (Penicillium vitale)).